The following is a 228-amino-acid chain: Large ribosomal subunit protein uL3 (228 aa).

The segment at 157 to 176 (CHRHAGGTGMSASPSRTFKG) is disordered.

It belongs to the universal ribosomal protein uL3 family. Part of the 50S ribosomal subunit. Forms a cluster with proteins L14 and L19.

Functionally, one of the primary rRNA binding proteins, it binds directly near the 3'-end of the 23S rRNA, where it nucleates assembly of the 50S subunit. The sequence is that of Large ribosomal subunit protein uL3 from Rhodopirellula baltica (strain DSM 10527 / NCIMB 13988 / SH1).